A 122-amino-acid chain; its full sequence is Large ribosomal subunit protein uL14c (122 aa).

Belongs to the universal ribosomal protein uL14 family. In terms of assembly, part of the 50S ribosomal subunit.

Its subcellular location is the plastid. In terms of biological role, binds to 23S rRNA. The chain is Large ribosomal subunit protein uL14c from Cuscuta reflexa (Southern Asian dodder).